Consider the following 193-residue polypeptide: MANMNALQQMIFPDENAPIHRKKSVTAASVKSKGTVLGQKKPGGARKALNDITNKSGIHAKAAASSKNKQIASAAVKEIDIAGERFLHDHSKCIKEQQNLWDDHYSADLMLLHHGSSIKEKHLNWDIEKMDAKDDLTYEEPEEMASPKFSDWLKNSTPWRSPIRHGSMMPSTPLAWRFDSCEFTLKEDSDDLF.

Positions 14 to 16 (DEN) match the DEN-box motif. The D-box signature appears at 46–49 (RKAL).

Interacts directly with the anaphase promoting complex/cyclosome (APC/C) through the CDC27B and CDC20-1 subunits. In terms of tissue distribution, expressed in somatic and reproductive tissues. Expressed in inflorescence, young buds, roots and basal portion of young leaves. Expressed in proliferating cells such as apical meristems of roots and shoots, expanding cotyledons and leaves, root vascular tissues, and in stomatal precursor cells.

The protein resides in the nucleus. It localises to the cytoplasm. Required for the maintenance of centromeric cohesion during interkinesis, until meiosis II. Required for regular configuration and segregation of sister chromatids in meiosis II. Also required for centromere cohesion during meiosis I. Involved in spindle organization at the end of telophase I and in meiosis II. Required to prevent precocious release of pericentromeric cohesins during meiosis, but not for cohesion establishment and monopolar orientation of kinetochores at meiosis I. Involved also in somatic development. Regulates mitotic cell division and ploidy stability in somatic cell types. May be involved in the organization of microtubules dynamics. Involved in abiotic stresses and mono- or divalent ions tolerance and may play a role in maintaining meristematic activity under saline conditions. PANS1 and GIG1 are part of a network linking centromere cohesion and cell cycle progression through control of APC/C activity. Regulates the number of dividing cells in root meristem and is necessary for the anaphase onset control through an APC/C-mediated pathway. Involved in maintaining correct chromosome arm cohesion under stress conditions. The chain is Protein PATRONUS 1 from Arabidopsis thaliana (Mouse-ear cress).